Here is a 160-residue protein sequence, read N- to C-terminus: Cytochrome b6-f complex subunit 4 (160 aa).

Transmembrane regions (helical) follow at residues 36 to 56 (LLYI…GLAV), 95 to 115 (LLGV…PFLE), and 131 to 151 (TVFL…TLPI).

Belongs to the cytochrome b family. PetD subfamily. The 4 large subunits of the cytochrome b6-f complex are cytochrome b6, subunit IV (17 kDa polypeptide, petD), cytochrome f and the Rieske protein, while the 4 small subunits are petG, petL, petM and petN. The complex functions as a dimer.

It localises to the plastid. The protein localises to the chloroplast thylakoid membrane. In terms of biological role, component of the cytochrome b6-f complex, which mediates electron transfer between photosystem II (PSII) and photosystem I (PSI), cyclic electron flow around PSI, and state transitions. This is Cytochrome b6-f complex subunit 4 from Amborella trichopoda.